We begin with the raw amino-acid sequence, 385 residues long: MNGRTLFFRRLFDYYKYQFKVLHAVIDWTVALYIVLPAIAFVIYQYIDLMNGRGLLYEWSEVAEWRWLYAVCVLIMFTGSIRTFLMEADKVFLLQKKEIIYQLKRYALLYSFLATLAKWLLLFFIVLPLISHSVLITFAESTALLCYLFGLHIFFLSLKQDRIRKPRSISRWIGDTLVRAILFAGSAILIVFTERHLLALFGILFLFFSVIRSLKKTASFTAFEAEVTEEKKSRLALAGLVMMMSQEAGMPKVKDRMRRKPLLYRNSKRIFKRRTICTGYKELFFKVMLRNGEYARQMYMLLSAFTVLIFVSPIWLKVIALLVYTGVCRYILTLIFDKVMDAPFLIGTDKESDEYYRARKSCINILHYAFAACCFLAAAVSLLFT.

Helical transmembrane passes span 24–44, 67–87, 106–128, 133–155, 176–193, 197–214, 304–324, and 365–385; these read AVID…FVIY, WLYA…FLME, YALL…IVLP, SVLI…HIFF, TLVR…IVFT, LLAL…IRSL, AFTV…LLVY, and ILHY…LLFT.

It localises to the cell membrane. The chain is Putative transporter YthQ (ythQ) from Bacillus subtilis (strain 168).